The chain runs to 147 residues: Hemoglobin subunit gamma (147 aa).

The Globin domain occupies 3–147; the sequence is HFTEEDKATI…VASALSSRYH (145 aa). Heme b is bound by residues His-64 and His-93.

It belongs to the globin family. In terms of assembly, heterotetramer of two alpha chains and two gamma chains in fetal hemoglobin (Hb F). In terms of tissue distribution, red blood cells.

In terms of biological role, gamma chains make up the fetal hemoglobin F, in combination with alpha chains. The polypeptide is Hemoglobin subunit gamma (HBG) (Macaca fuscata fuscata (Japanese macaque)).